The primary structure comprises 63 residues: Large ribosomal subunit protein bL32 (63 aa).

The interval 1–45 is disordered; sequence MAVQQNKKSRSRRDMRRSHDALTKPTLSVDPTTGETHLRHHMTPD. The segment covering 7 to 16 has biased composition (basic residues); sequence KKSRSRRDMR. Polar residues predominate over residues 25–35; the sequence is PTLSVDPTTGE.

Belongs to the bacterial ribosomal protein bL32 family.

The chain is Large ribosomal subunit protein bL32 from Legionella pneumophila (strain Paris).